The chain runs to 785 residues: Protein PHTF2 (785 aa).

One can recognise a PHTF domain in the interval 46–191; it reads IQCLIGAYDQ…VHCQIVSTRT (146 aa). 2 helical membrane-spanning segments follow: residues 136–156 and 164–184; these read VIFF…VLFC and IPLT…TVHC. 2 disordered regions span residues 190–239 and 304–401; these read RTPK…GTST and RPEE…PESE. Residues 200 to 209 are compositionally biased toward basic residues; it reads GKRRRKLRKA. A compositionally biased stretch (basic and acidic residues) spans 210–219; the sequence is AHLEVHREGD. Composition is skewed to polar residues over residues 220-239 and 309-333; these read GSST…GTST and AWNT…VSDE. The N-linked (GlcNAc...) asparagine glycan is linked to asparagine 329. Residues 359–369 show a composition bias toward basic residues; it reads RNRKSHHYKKH. The span at 378–390 shows a compositional bias: low complexity; it reads SGTSCSSRCSSSR. Basic and acidic residues predominate over residues 391 to 400; sequence QDSESARPES. 4 helical membrane passes run 497–517, 553–573, 634–654, and 668–688; these read IGYQ…PFVF, VIIS…LLCV, VIVS…CAQL, and WELV…VTLG. N-linked (GlcNAc...) asparagine glycosylation is found at asparagine 697 and asparagine 756. Residues 760–780 form a helical membrane-spanning segment; that stretch reads VVILSAVSGVISDLLGFNLKL.

It localises to the membrane. In Homo sapiens (Human), this protein is Protein PHTF2 (PHTF2).